We begin with the raw amino-acid sequence, 92 residues long: Small ribosomal subunit protein uS19 (92 aa).

Belongs to the universal ribosomal protein uS19 family.

In terms of biological role, protein S19 forms a complex with S13 that binds strongly to the 16S ribosomal RNA. The chain is Small ribosomal subunit protein uS19 from Acaryochloris marina (strain MBIC 11017).